The primary structure comprises 274 residues: Dermonecrotic toxin LarSicTox-alphaIV1 (274 aa).

The active site involves histidine 5. Mg(2+)-binding residues include glutamate 25 and aspartate 27. Catalysis depends on histidine 41, which acts as the Nucleophile. 2 disulfides stabilise this stretch: cysteine 45/cysteine 51 and cysteine 47/cysteine 192. Aspartate 85 contacts Mg(2+).

It belongs to the arthropod phospholipase D family. Class II subfamily. It depends on Mg(2+) as a cofactor. In terms of tissue distribution, expressed by the venom gland.

It localises to the secreted. The enzyme catalyses an N-(acyl)-sphingosylphosphocholine = an N-(acyl)-sphingosyl-1,3-cyclic phosphate + choline. The catalysed reaction is an N-(acyl)-sphingosylphosphoethanolamine = an N-(acyl)-sphingosyl-1,3-cyclic phosphate + ethanolamine. It catalyses the reaction a 1-acyl-sn-glycero-3-phosphocholine = a 1-acyl-sn-glycero-2,3-cyclic phosphate + choline. It carries out the reaction a 1-acyl-sn-glycero-3-phosphoethanolamine = a 1-acyl-sn-glycero-2,3-cyclic phosphate + ethanolamine. Its function is as follows. Dermonecrotic toxins cleave the phosphodiester linkage between the phosphate and headgroup of certain phospholipids (sphingolipid and lysolipid substrates), forming an alcohol (often choline) and a cyclic phosphate. This toxin acts on sphingomyelin (SM). It may also act on ceramide phosphoethanolamine (CPE), lysophosphatidylcholine (LPC) and lysophosphatidylethanolamine (LPE), but not on lysophosphatidylserine (LPS), and lysophosphatidylglycerol (LPG). It acts by transphosphatidylation, releasing exclusively cyclic phosphate products as second products. Induces dermonecrosis, hemolysis, increased vascular permeability, edema, inflammatory response, and platelet aggregation. This Loxosceles arizonica (Arizona brown spider) protein is Dermonecrotic toxin LarSicTox-alphaIV1.